The following is a 714-amino-acid chain: Kinesin-like protein KIN-13 (714 aa).

The region spanning 1 to 63 (MSDLVYQWLE…FRLITTLKSR (63 aa)) is the SAM domain. Polar residues predominate over residues 69 to 81 (QQPSAPNTGATPQ). 2 disordered regions span residues 69 to 109 (QQPS…NDIQ) and 122 to 161 (GGYEPPYVSAQGSGPANGDDYVIPTIPYHPNAPNPPNPRG). The span at 82-92 (SVPSSHVSPHV) shows a compositional bias: low complexity. Pro residues predominate over residues 151-160 (PNAPNPPNPR). The Kinesin motor domain maps to 183–515 (RIRVVIRKRP…LRYADRVKEL (333 aa)). 273 to 280 (GQTGSGKS) contributes to the ATP binding site.

Belongs to the TRAFAC class myosin-kinesin ATPase superfamily. Kinesin family. KIN-13 subfamily. Interacts with PLK. Phosphorylated by PLK.

The protein localises to the cytoplasm. The protein resides in the cytoskeleton. It localises to the cell projection. Its subcellular location is the cilium. It is found in the flagellum. The protein localises to the flagellum basal body. The protein resides in the flagellum axoneme. It localises to the spindle. Its subcellular location is the chromosome. It is found in the centromere. The protein localises to the kinetochore. Functionally, involved in cell cycle. Involved in formation of flagella, regulation of flagellar length, and formation of median bodies during interphase. Regulates flagellar length in all eight distal flagellar tips by promoting disassembly of the microtubules. Disassembles microtubules at the distal flagellar tips in a length-dependent manner in order to maintain different equilibrium lengths of the four flagellar pairs. Regulates interphase and mitotic microtubule dynamics. Regulates microtubule disassembly dynamics of the dual mitotic spindles and the median body. The chain is Kinesin-like protein KIN-13 from Giardia intestinalis (strain ATCC 50803 / WB clone C6) (Giardia lamblia).